We begin with the raw amino-acid sequence, 81 residues long: UPF0180 protein RBAM_013970 (81 aa).

Belongs to the UPF0180 family.

The protein is UPF0180 protein RBAM_013970 of Bacillus velezensis (strain DSM 23117 / BGSC 10A6 / LMG 26770 / FZB42) (Bacillus amyloliquefaciens subsp. plantarum).